A 236-amino-acid chain; its full sequence is Biosynthetic peptidoglycan transglycosylase (236 aa).

Residues 12 to 31 (ALLWFAAGSIAVVLVLRWVP) traverse the membrane as a helical segment.

This sequence belongs to the glycosyltransferase 51 family.

The protein localises to the cell inner membrane. The catalysed reaction is [GlcNAc-(1-&gt;4)-Mur2Ac(oyl-L-Ala-gamma-D-Glu-L-Lys-D-Ala-D-Ala)](n)-di-trans,octa-cis-undecaprenyl diphosphate + beta-D-GlcNAc-(1-&gt;4)-Mur2Ac(oyl-L-Ala-gamma-D-Glu-L-Lys-D-Ala-D-Ala)-di-trans,octa-cis-undecaprenyl diphosphate = [GlcNAc-(1-&gt;4)-Mur2Ac(oyl-L-Ala-gamma-D-Glu-L-Lys-D-Ala-D-Ala)](n+1)-di-trans,octa-cis-undecaprenyl diphosphate + di-trans,octa-cis-undecaprenyl diphosphate + H(+). It functions in the pathway cell wall biogenesis; peptidoglycan biosynthesis. Peptidoglycan polymerase that catalyzes glycan chain elongation from lipid-linked precursors. The chain is Biosynthetic peptidoglycan transglycosylase from Pseudomonas entomophila (strain L48).